The sequence spans 412 residues: MDTIIHNSTRNNTPPHINDTCNMTGPLFAIRTTEAVLNTFIIFVGGPLNAIVLITQLLTNRVLGYSTPTIYMTNLYSTNFLTLTVLPFIVLSNQWLLPAGVASCKFLSVIYYSSCTVGFATVALIAADRYRVLHKRTYARQSYRSTYMILLLTWLAGLIFSVPAAVYTTVVMHHDANDTNNTNGHATCVLYFVAEEVHTVLLSWKVLLTMVWGAAPVIMMTWFYAFFYSTVQRTSQKQRSRTLTFVSVLLISFVALQTPYVSLMIFNSYATTAWPMQCEHLTLRRTIGTLARVVPHLHCLINPILYALLGHDFLQRMRQCFRGQLLDRRAFLRSQQNQRATAETNLAAGNNSQSVATSLDTNSKNYNQHAKRSVSFNFPSGTWKGGQKTASNDTSTKIPHRLSQSHHNLSGV.

Residues 1-29 (MDTIIHNSTRNNTPPHINDTCNMTGPLFA) lie on the Virion surface side of the membrane. 3 N-linked (GlcNAc...) asparagine; by host glycosylation sites follow: Asn7, Asn18, and Asn22. A helical membrane pass occupies residues 30–54 (IRTTEAVLNTFIIFVGGPLNAIVLI). At 55 to 70 (TQLLTNRVLGYSTPTI) the chain is on the intravirion side. The helical transmembrane segment at 71 to 95 (YMTNLYSTNFLTLTVLPFIVLSNQW) threads the bilayer. The Virion surface portion of the chain corresponds to 96 to 102 (LLPAGVA). A helical membrane pass occupies residues 103–129 (SCKFLSVIYYSSCTVGFATVALIAADR). A disulfide bridge connects residues Cys104 and Cys188. The Intravirion portion of the chain corresponds to 130–138 (YRVLHKRTY). A helical transmembrane segment spans residues 139–160 (ARQSYRSTYMILLLTWLAGLIF). The Virion surface portion of the chain corresponds to 161–203 (SVPAAVYTTVVMHHDANDTNNTNGHATCVLYFVAEEVHTVLLS). N-linked (GlcNAc...) asparagine; by host glycans are attached at residues Asn177 and Asn180. Residues 204-224 (WKVLLTMVWGAAPVIMMTWFY) form a helical membrane-spanning segment. The Intravirion segment spans residues 225 to 240 (AFFYSTVQRTSQKQRS). A helical transmembrane segment spans residues 241 to 267 (RTLTFVSVLLISFVALQTPYVSLMIFN). Residues 268-281 (SYATTAWPMQCEHL) are Virion surface-facing. Residues 282 to 305 (TLRRTIGTLARVVPHLHCLINPIL) form a helical membrane-spanning segment. Topologically, residues 306-412 (YALLGHDFLQ…SQSHHNLSGV (107 aa)) are intravirion. The segment at 377 to 412 (NFPSGTWKGGQKTASNDTSTKIPHRLSQSHHNLSGV) is disordered. The segment covering 388–397 (KTASNDTSTK) has biased composition (polar residues).

Belongs to the G-protein coupled receptor 1 family. In terms of assembly, heterodimerizes with US28.

The protein localises to the virion. The protein resides in the host cell membrane. Its subcellular location is the host cytoplasm. Its function is as follows. G-protein-coupled receptor (vGPCR) that constitutively activates multiple oncogenic signaling pathways including STAT3, AP-1, phospholipase C, NF-kappa-B or cAMP-responsive element (CRE) pathways. Plays an important role in viral reactivation from latency through activation of host CREB1, facilitating its recruitment to the viral major immediate early (MIE) genes. In turn, expression of the MIE-driven genes such as UL123 are de-repressed. Also facilitates virus dissemination via the extracellular and cell-to-cell route. In Human cytomegalovirus (strain AD169) (HHV-5), this protein is G-protein coupled receptor homolog UL33 (UL33).